Consider the following 488-residue polypeptide: Glutamyl-tRNA(Gln) amidotransferase subunit A (488 aa).

Residues Lys-76 and Ser-151 each act as charge relay system in the active site. Ser-175 acts as the Acyl-ester intermediate in catalysis.

Belongs to the amidase family. GatA subfamily. As to quaternary structure, heterotrimer of A, B and C subunits.

It catalyses the reaction L-glutamyl-tRNA(Gln) + L-glutamine + ATP + H2O = L-glutaminyl-tRNA(Gln) + L-glutamate + ADP + phosphate + H(+). Its function is as follows. Allows the formation of correctly charged Gln-tRNA(Gln) through the transamidation of misacylated Glu-tRNA(Gln) in organisms which lack glutaminyl-tRNA synthetase. The reaction takes place in the presence of glutamine and ATP through an activated gamma-phospho-Glu-tRNA(Gln). This Symbiobacterium thermophilum (strain DSM 24528 / JCM 14929 / IAM 14863 / T) protein is Glutamyl-tRNA(Gln) amidotransferase subunit A.